Consider the following 166-residue polypeptide: Small ribosomal subunit protein bS6 (166 aa).

Basic and acidic residues-rich tracts occupy residues 96–142 (HEEG…DRPP) and 149–166 (GGDR…GGAE). Residues 96 to 166 (HEEGPSAMMQ…PREGFEGGAE (71 aa)) form a disordered region.

This sequence belongs to the bacterial ribosomal protein bS6 family.

Its function is as follows. Binds together with bS18 to 16S ribosomal RNA. The sequence is that of Small ribosomal subunit protein bS6 from Mesorhizobium japonicum (strain LMG 29417 / CECT 9101 / MAFF 303099) (Mesorhizobium loti (strain MAFF 303099)).